The primary structure comprises 480 residues: Glutamyl-tRNA(Gln) amidotransferase subunit A (480 aa).

Catalysis depends on charge relay system residues Lys-74 and Ser-149. The active-site Acyl-ester intermediate is Ser-173.

The protein belongs to the amidase family. GatA subfamily. As to quaternary structure, heterotrimer of A, B and C subunits.

It carries out the reaction L-glutamyl-tRNA(Gln) + L-glutamine + ATP + H2O = L-glutaminyl-tRNA(Gln) + L-glutamate + ADP + phosphate + H(+). Allows the formation of correctly charged Gln-tRNA(Gln) through the transamidation of misacylated Glu-tRNA(Gln) in organisms which lack glutaminyl-tRNA synthetase. The reaction takes place in the presence of glutamine and ATP through an activated gamma-phospho-Glu-tRNA(Gln). The polypeptide is Glutamyl-tRNA(Gln) amidotransferase subunit A (Ruthia magnifica subsp. Calyptogena magnifica).